The chain runs to 622 residues: MNRQESINSFNSDETSSLSDVESQQPQQYIPSESGSKSNMAPNQLKLTRTETVKSLQDMGVSSKAPVPDVNAPQSSKNKIFPEEYTLETPTGLVPVATLHSIGRTSTAISRTRTRQIDGASSPSSNEDALESDNNEKGKEGDSSGANDEAPDLDPEIEFVTFVTGDPENPHNWPAWIRWSYTVLLSILVICVAYGSACISGGLGTVEKKYHVGMEAAILSVSLMVIGFSLGPLIWSPVSDLYGRRVAYFVSMGLYVIFNIPCALAPNLGSLLACRFLCGVWSSSGLCLVGGSIADMFPSETRGKAIAFFAFAPYVGPVVGPLVNGFISVSTGRMDLIFWVNMAFAGVMWIISSAIPETYAPVILKRKAARLRKETGNPKIMTEQEAQGVSMGEMMRACLLRPLYFSVTEPVLVATCFYVCLIYSLLYAFFFAFPVIFGELYGYKDNLVGLMFIPIVIGALWALATTFYCENKYLQIVKQRKPTPEDRLLGAKIGAPFAAIALWILGATAYKHIIWVGPASAGLAFGFGMVLIYYSLNNYIIDCYVQYASSALATKVFLRSAGGAAFPLFTIQMYHKLNLHWGSWLLAFISTAMIALPFAFSYWGKGLRHKLSKKDYSIDSIE.

The span at 1 to 47 (MNRQESINSFNSDETSSLSDVESQQPQQYIPSESGSKSNMAPNQLKL) shows a compositional bias: polar residues. The segment at 1 to 76 (MNRQESINSF…VPDVNAPQSS (76 aa)) is disordered. Residues 1–182 (MNRQESINSF…WPAWIRWSYT (182 aa)) lie on the Cytoplasmic side of the membrane. Ser-55 carries the phosphoserine modification. Thr-98 is modified (phosphothreonine). Residues Ser-101 and Ser-132 each carry the phosphoserine modification. The interval 105–152 (TSTAISRTRTRQIDGASSPSSNEDALESDNNEKGKEGDSSGANDEAPD) is disordered. Residues 183 to 203 (VLLSILVICVAYGSACISGGL) form a helical membrane-spanning segment. The Extracellular segment spans residues 204–215 (GTVEKKYHVGME). Residues 216-236 (AAILSVSLMVIGFSLGPLIWS) form a helical membrane-spanning segment. Residues 237-245 (PVSDLYGRR) lie on the Cytoplasmic side of the membrane. The chain crosses the membrane as a helical span at residues 246–266 (VAYFVSMGLYVIFNIPCALAP). Residues 267-275 (NLGSLLACR) are Extracellular-facing. Residues 276 to 296 (FLCGVWSSSGLCLVGGSIADM) form a helical membrane-spanning segment. The Cytoplasmic segment spans residues 297–305 (FPSETRGKA). The helical transmembrane segment at 306-326 (IAFFAFAPYVGPVVGPLVNGF) threads the bilayer. The Extracellular portion of the chain corresponds to 327–335 (ISVSTGRMD). Residues 336-356 (LIFWVNMAFAGVMWIISSAIP) traverse the membrane as a helical segment. The Cytoplasmic segment spans residues 357 to 416 (ETYAPVILKRKAARLRKETGNPKIMTEQEAQGVSMGEMMRACLLRPLYFSVTEPVLVATC). Residues 417–437 (FYVCLIYSLLYAFFFAFPVIF) form a helical membrane-spanning segment. Over 438 to 446 (GELYGYKDN) the chain is Extracellular. A helical membrane pass occupies residues 447–467 (LVGLMFIPIVIGALWALATTF). The Cytoplasmic portion of the chain corresponds to 468–487 (YCENKYLQIVKQRKPTPEDR). A helical transmembrane segment spans residues 488-508 (LLGAKIGAPFAAIALWILGAT). Residues 509–512 (AYKH) lie on the Extracellular side of the membrane. Residues 513 to 533 (IIWVGPASAGLAFGFGMVLIY) traverse the membrane as a helical segment. Topologically, residues 534–550 (YSLNNYIIDCYVQYASS) are cytoplasmic. A helical membrane pass occupies residues 551–571 (ALATKVFLRSAGGAAFPLFTI). At 572 to 583 (QMYHKLNLHWGS) the chain is on the extracellular side. A helical transmembrane segment spans residues 584–604 (WLLAFISTAMIALPFAFSYWG). Residues 605 to 622 (KGLRHKLSKKDYSIDSIE) lie on the Cytoplasmic side of the membrane.

It belongs to the major facilitator superfamily. DHA1 family. Polyamines/proton antiporter (TC 2.A.1.2.16) subfamily.

The protein resides in the cell membrane. Its function is as follows. Cell membrane polyamine/proton antiporter, involved in the detoxification of excess polyamines in the cytoplasm. Recognizes spermine, but not spermidine. This Saccharomyces cerevisiae (strain ATCC 204508 / S288c) (Baker's yeast) protein is Polyamine transporter 3 (TPO3).